A 1806-amino-acid chain; its full sequence is SH3 and multiple ankyrin repeat domains protein 3 (1806 aa).

The interval 76-150 is intramolecular interaction with the ANK repeats; it reads MDGPGASAVV…KFLDEERLLQ (75 aa). Tyr-197 carries the phosphotyrosine modification. ANK repeat units lie at residues 223–253, 257–286, 290–320, 324–353, 357–386, and 390–420; these read SGEC…HLDF, DGLT…SPDY, RGLT…QLGI, NGWQ…DMGA, SGNT…NRDV, and NSQT…DVVP. Positions 407–416 are enriched in basic and acidic residues; sequence AEVIKTHKDS. Positions 407–467 are disordered; sequence AEVIKTHKDS…AQPAASPGPS (61 aa). The span at 439–461 shows a compositional bias: pro residues; sequence LASPRPLQRSASDINLKGEAQPA. 5 positions are modified to phosphoserine: Ser-448, Ser-450, Ser-463, Ser-470, and Ser-558. In terms of domain architecture, SH3 spans 546–605; the sequence is VPGRKFIAVKAHSPQGEGEIPLHRGEAVKVLSIGEGGFWEGTVKGRTGWFPADCVEEVQM. Position 631 is a phosphotyrosine (Tyr-631). The PDZ domain occupies 646–740; it reads VAVLQKRDHE…RLVMKVVSVT (95 aa). Disordered stretches follow at residues 665–689 and 760–853; these read KAET…ESVD and PSTT…KGIP. The tract at residues 753 to 760 is required for interaction with ABI1; sequence PPPPKRAP. Ser-770 bears the Phosphoserine mark. Residues 813 to 845 are compositionally biased toward pro residues; sequence ATVKQRPTSRRITPAEISSLFERQGLPGPEKLP. 3 positions are modified to phosphoserine: Ser-857, Ser-866, and Ser-877. The interval 871–1021 is disordered; that stretch reads RFPRSTSMQD…FSASLFAPSK (151 aa). Pro residues predominate over residues 906-915; sequence DSGPPPAFSP. Residues Ser-966 and Ser-973 each carry the phosphoserine modification. Phosphothreonine is present on Thr-988. Over residues 993–1013 the composition is skewed to gly residues; it reads PKRRPRPPGPDSPYANLGAFS. Tyr-1006 is subject to Phosphotyrosine. At Arg-1041 the chain carries Asymmetric dimethylarginine. Low complexity predominate over residues 1115–1124; the sequence is PGADLPSLQP. Disordered regions lie at residues 1115-1460, 1475-1525, and 1546-1584; these read PGAD…MSTL, ADGH…HHAA, and SKLW…KDTR. Over residues 1173–1193 the composition is skewed to basic and acidic residues; the sequence is TGKPLDPSSPLALALAARERA. Phosphothreonine is present on Thr-1204. Phosphoserine is present on residues Ser-1208, Ser-1233, Ser-1237, and Ser-1240. A compositionally biased stretch (pro residues) spans 1251–1261; it reads EAEKVPREERK. Phosphothreonine is present on Thr-1309. Ser-1328 carries the phosphoserine modification. Basic and acidic residues predominate over residues 1360–1370; sequence LPPAQLSSSDE. Low complexity-rich tracts occupy residues 1371–1392 and 1444–1460; these read ETRE…ANGV and HLET…MSTL. The SH3-binding motif lies at 1485-1491; sequence PPVPPKP. The residue at position 1495 (Ser-1495) is a Phosphoserine. Residues 1495–1505 show a composition bias toward polar residues; that stretch reads SPLGKGPVTFR. The stretch at 1569–1589 forms a coiled coil; sequence ISELSSRLQQLNKDTRSLGEE. Phosphoserine is present on residues Ser-1585, Ser-1596, Ser-1604, and Ser-1614. Over residues 1627 to 1637 the composition is skewed to low complexity; it reads PGGPGGGASYS. A disordered region spans residues 1627–1664; it reads PGGPGGGASYSVRPSGRYPVARRAPSPVKPASLERVEG. Residues 1638-1657 show a composition bias toward pro residues; it reads VRPSGRYPVARRAPSPVKPA. Phosphoserine occurs at positions 1709, 1711, and 1713. An SAM domain is found at 1743-1806; it reads WSKFDVGDWL…ERALRQLDGS (64 aa).

May homomultimerize via its SAM domain. Interacts with BAIAP2, DBNL and SLC17A7/VGLUT1. Interacts with DLGAP1/GKAP, GRM1/MGLUR1, GRM5/MGLUR5 and LZTS3 C-termini via its PDZ domain. Interacts with ABI1, HOMER1, HOMER2, HOMER3 and CTTN/cortactin SH3 domain. Is part of a complex with DLG4/PSD-95 and DLGAP1/GKAP. Interacts (via PDZ domain) with the GRIA1 subunit of the AMPA receptor (via PDZ-binding motif). Interacts with WASF1 and CYFIP2; the interactions mediate the association of SHANK3 with the WAVE1 complex. Interacts with ARPC2; the interaction probably mediates the association of SHANK3 with the Arp2/3 complex. Interacts (via ANK repeats) with SHARPIN and SPTAN1. Interacts (via PDZ domain) with ARHGAP44 (probably via PDZ-binding motif); the interaction takes place in dendritic spines and promotes GRIA1 exocytosis. Interacts with CAMK2A. Interacts with DIP2A. Interacts with ADGRL3. In terms of tissue distribution, expressed in the cerebral cortex and the cerebellum.

Its subcellular location is the cytoplasm. The protein localises to the postsynaptic density. It is found in the cell projection. It localises to the dendritic spine. Its function is as follows. Major scaffold postsynaptic density protein which interacts with multiple proteins and complexes to orchestrate the dendritic spine and synapse formation, maturation and maintenance. Interconnects receptors of the postsynaptic membrane including NMDA-type and metabotropic glutamate receptors via complexes with GKAP/PSD-95 and HOMER, respectively, and the actin-based cytoskeleton. Plays a role in the structural and functional organization of the dendritic spine and synaptic junction through the interaction with Arp2/3 and WAVE1 complex as well as the promotion of the F-actin clusters. By way of this control of actin dynamics, participates in the regulation of developing neurons growth cone motility and the NMDA receptor-signaling. Also modulates GRIA1 exocytosis and GRM5/MGLUR5 expression and signaling to control the AMPA and metabotropic glutamate receptor-mediated synaptic transmission and plasticity. May be required at an early stage of synapse formation and be inhibited by IGF1 to promote synapse maturation. This chain is SH3 and multiple ankyrin repeat domains protein 3 (SHANK3), found in Homo sapiens (Human).